A 408-amino-acid chain; its full sequence is Argininosuccinate synthase (408 aa).

ATP-binding positions include 12–20 (AYSGGLDTS) and Ala39. Tyr90 and Ser95 together coordinate L-citrulline. Position 120 (Gly120) interacts with ATP. Thr122, Asn126, and Asp127 together coordinate L-aspartate. Asn126 lines the L-citrulline pocket. L-citrulline is bound by residues Arg130, Ser181, Ser190, Glu266, and Tyr278.

Belongs to the argininosuccinate synthase family. Type 1 subfamily. As to quaternary structure, homotetramer.

The protein localises to the cytoplasm. The catalysed reaction is L-citrulline + L-aspartate + ATP = 2-(N(omega)-L-arginino)succinate + AMP + diphosphate + H(+). It functions in the pathway amino-acid biosynthesis; L-arginine biosynthesis; L-arginine from L-ornithine and carbamoyl phosphate: step 2/3. This chain is Argininosuccinate synthase, found in Methylococcus capsulatus (strain ATCC 33009 / NCIMB 11132 / Bath).